A 176-amino-acid chain; its full sequence is Nucleoside triphosphate/diphosphate phosphatase (176 aa).

Arg23 (proton donor) is an active-site residue. Residues Asn87, Asp103, Asp105, Asp107, Asp120, and Glu123 each coordinate Mg(2+).

It belongs to the Ntdp family. Mg(2+) is required as a cofactor.

It carries out the reaction a ribonucleoside 5'-triphosphate + H2O = a ribonucleoside 5'-diphosphate + phosphate + H(+). The catalysed reaction is a ribonucleoside 5'-diphosphate + H2O = a ribonucleoside 5'-phosphate + phosphate + H(+). Functionally, has nucleoside phosphatase activity towards nucleoside triphosphates and nucleoside diphosphates. The sequence is that of Nucleoside triphosphate/diphosphate phosphatase from Bacillus velezensis (strain DSM 23117 / BGSC 10A6 / LMG 26770 / FZB42) (Bacillus amyloliquefaciens subsp. plantarum).